The following is a 103-amino-acid chain: Large ribosomal subunit protein mL41 (103 aa).

Belongs to the mitochondrion-specific ribosomal protein mL41 family. As to quaternary structure, component of the mitochondrial large ribosomal subunit (mt-LSU). Mature N.crassa 74S mitochondrial ribosomes consist of a small (37S) and a large (54S) subunit. The 37S small subunit contains a 16S ribosomal RNA (16S mt-rRNA) and 32 different proteins. The 54S large subunit contains a 23S rRNA (23S mt-rRNA) and 42 different proteins.

The protein localises to the mitochondrion. In terms of biological role, component of the mitochondrial ribosome (mitoribosome), a dedicated translation machinery responsible for the synthesis of mitochondrial genome-encoded proteins, including at least some of the essential transmembrane subunits of the mitochondrial respiratory chain. The mitoribosomes are attached to the mitochondrial inner membrane and translation products are cotranslationally integrated into the membrane. The protein is Large ribosomal subunit protein mL41 (mrpl27) of Neurospora crassa (strain ATCC 24698 / 74-OR23-1A / CBS 708.71 / DSM 1257 / FGSC 987).